The following is a 285-amino-acid chain: Golgi phosphoprotein 3-like (285 aa).

The segment at 1-39 (MTTLTHRARRTEVGKNSEKKVESEENVNQDRNQDNEDIG) is disordered. Residues 10–23 (RTEVGKNSEKKVES) show a composition bias toward basic and acidic residues. A 1,2-diacyl-sn-glycero-3-phospho-(1D-myo-inositol 4-phosphate) is bound by residues Trp-67 and Arg-76. Ser-112 carries the phosphoserine modification. A 1,2-diacyl-sn-glycero-3-phospho-(1D-myo-inositol 4-phosphate) is bound by residues Arg-157 and Arg-160. The tract at residues 176–187 (EKQNFLLFDMTT) is beta-hairpin required for oligomerization.

This sequence belongs to the GOLPH3/VPS74 family. In terms of assembly, homooligomer. Does not interact MYO18; differs from GOLPH3 by its inability to interact with MYO18. May interact with ARF1.

The protein localises to the golgi apparatus. The protein resides in the golgi stack membrane. Its subcellular location is the trans-Golgi network membrane. Phosphatidylinositol-4-phosphate-binding protein that may antagonize the action of GOLPH3 which is required for the process of vesicle budding at the Golgi and anterograde transport to the plasma membrane. This chain is Golgi phosphoprotein 3-like (GOLPH3L), found in Bos taurus (Bovine).